The chain runs to 372 residues: N-methyl-L-tryptophan oxidase (372 aa).

An FAD-binding site is contributed by 4–34 (DLIIIGSGSVGAAAGYYATRAGLNVLMTDAH). Cys308 bears the S-8alpha-FAD cysteine mark.

The protein belongs to the MSOX/MTOX family. MTOX subfamily. Monomer. It depends on FAD as a cofactor.

The enzyme catalyses N(alpha)-methyl-L-tryptophan + O2 + H2O = L-tryptophan + formaldehyde + H2O2. Functionally, catalyzes the oxidative demethylation of N-methyl-L-tryptophan. The sequence is that of N-methyl-L-tryptophan oxidase from Escherichia coli O127:H6 (strain E2348/69 / EPEC).